Reading from the N-terminus, the 430-residue chain is S-adenosylmethionine synthase (430 aa).

Residue H14 coordinates ATP. Residue D16 participates in Mg(2+) binding. K(+) is bound at residue E42. L-methionine contacts are provided by E55 and Q98. Residues 98-108 are flexible loop; that stretch reads QSADINRGVER. ATP contacts are provided by residues 164–166, 254–255, D263, 269–270, A286, and K290; these read DAK, KF, and RK. L-methionine is bound at residue D263. L-methionine is bound at residue K294.

The protein belongs to the AdoMet synthase family. Homotetramer; dimer of dimers. The cofactor is Mg(2+). K(+) serves as cofactor.

Its subcellular location is the cytoplasm. It carries out the reaction L-methionine + ATP + H2O = S-adenosyl-L-methionine + phosphate + diphosphate. It participates in amino-acid biosynthesis; S-adenosyl-L-methionine biosynthesis; S-adenosyl-L-methionine from L-methionine: step 1/1. Functionally, catalyzes the formation of S-adenosylmethionine (AdoMet) from methionine and ATP. The overall synthetic reaction is composed of two sequential steps, AdoMet formation and the subsequent tripolyphosphate hydrolysis which occurs prior to release of AdoMet from the enzyme. The chain is S-adenosylmethionine synthase from Phocaeicola vulgatus (strain ATCC 8482 / DSM 1447 / JCM 5826 / CCUG 4940 / NBRC 14291 / NCTC 11154) (Bacteroides vulgatus).